Here is a 383-residue protein sequence, read N- to C-terminus: Histidine decarboxylase (383 aa).

A substrate-binding site is contributed by histidine 120. Lysine 233 is modified (N6-(pyridoxal phosphate)lysine).

It belongs to the group II decarboxylase family. Homotetramer. The cofactor is pyridoxal 5'-phosphate.

It carries out the reaction L-histidine + H(+) = histamine + CO2. The chain is Histidine decarboxylase from Acinetobacter baumannii (strain AB307-0294).